A 289-amino-acid polypeptide reads, in one-letter code: Oxaloacetate decarboxylase (289 aa).

A substrate-binding site is contributed by Ser47. Asp85 contacts Mg(2+). Substrate contacts are provided by Arg156 and His232.

Belongs to the isocitrate lyase/PEP mutase superfamily. Oxaloacetate decarboxylase family. Homotetramer; dimer of dimers. Mg(2+) serves as cofactor.

It carries out the reaction oxaloacetate + H(+) = pyruvate + CO2. Functionally, catalyzes the decarboxylation of oxaloacetate into pyruvate. Seems to play a role in maintaining cellular concentrations of bicarbonate and pyruvate. This chain is Oxaloacetate decarboxylase, found in Rhodopseudomonas palustris (strain HaA2).